A 242-amino-acid polypeptide reads, in one-letter code: Agamous-like MADS-box protein MADS4 (242 aa).

An MADS-box domain is found at 1-61; the sequence is MGRGRVELKR…GKLYEFCSSS (61 aa). The K-box domain maps to 89 to 185; the sequence is ELSSQQEYLK…GTQVNQLQWN (97 aa).

In terms of tissue distribution, expressed in flowers and seeds.

It localises to the nucleus. Probable transcription factor involved in flower development. The sequence is that of Agamous-like MADS-box protein MADS4 from Vitis vinifera (Grape).